The chain runs to 62 residues: Sperm protamine P1 (62 aa).

The tract at residues 1–62 is disordered; it reads MARYRRRSRS…RYSRRGRRRY (62 aa).

The protein belongs to the protamine P1 family. As to expression, testis.

Its subcellular location is the nucleus. It is found in the chromosome. Protamines substitute for histones in the chromatin of sperm during the haploid phase of spermatogenesis. They compact sperm DNA into a highly condensed, stable and inactive complex. In Sarcophilus harrisii (Tasmanian devil), this protein is Sperm protamine P1 (PRM1).